The primary structure comprises 137 residues: Large ribosomal subunit protein uL14 (137 aa).

It belongs to the universal ribosomal protein uL14 family. In terms of assembly, component of the large ribosomal subunit. Mature ribosomes consist of a small (40S) and a large (60S) subunit. The 40S subunit contains about 32 different proteins and 1 molecule of RNA (18S). The 60S subunit contains 45 different proteins and 3 molecules of RNA (25S, 5.8S and 5S).

It localises to the cytoplasm. Component of the ribosome, a large ribonucleoprotein complex responsible for the synthesis of proteins in the cell. The small ribosomal subunit (SSU) binds messenger RNAs (mRNAs) and translates the encoded message by selecting cognate aminoacyl-transfer RNA (tRNA) molecules. The large subunit (LSU) contains the ribosomal catalytic site termed the peptidyl transferase center (PTC), which catalyzes the formation of peptide bonds, thereby polymerizing the amino acids delivered by tRNAs into a polypeptide chain. The nascent polypeptides leave the ribosome through a tunnel in the LSU and interact with protein factors that function in enzymatic processing, targeting, and the membrane insertion of nascent chains at the exit of the ribosomal tunnel. In Candida albicans (strain SC5314 / ATCC MYA-2876) (Yeast), this protein is Large ribosomal subunit protein uL14.